Consider the following 183-residue polypeptide: QYGDYGYPYQQYHDYSDDGWVNLNRQGFSYQCPHGQVVVAVRSIFNKKEGSDRQWNYACMPTPQSLGEPSECWWEEINRAGMEWYQTCSNNGLVAGFQSRYFESVLDREWQFYCCRYSKRCPYSCWMTTEYPGHYGEEMDMISYNYDYYMRGATTTFSAVERDRQWKFIMCRMTDYDCEFANV.

Gln1 carries the pyrrolidone carboxylic acid modification. Tyr5 carries the sulfotyrosine modification. A run of 4 repeats spans residues 8–61 (PYQQ…ACMP), 52–57 (DRQWNY), 62–117 (TPQS…CCRY), and 107–112 (DREWQF). A 2 X 53-55 AA tandem repeats region spans residues 8 to 117 (PYQQYHDYSD…REWQFYCCRY (110 aa)). Intrachain disulfides connect Cys32–Cys59, Cys72–Cys114, Cys88–Cys115, Cys121–Cys178, and Cys125–Cys171. A 3 X 6 AA tandem repeats of D-R-[EQ]-W-[NQK]-[FY] region spans residues 52–168 (DRQWNYACMP…AVERDRQWKF (117 aa)). 4 positions are modified to sulfotyrosine: Tyr144, Tyr146, Tyr148, and Tyr149. The 2-3 repeat unit spans residues 163–168 (DRQWKF). Residue Tyr176 is modified to Sulfotyrosine.

It belongs to the dermatopontin family. Interacts with TGFB1, DCN and collagen. Post-translationally, sulfated on tyrosine residue(s). In terms of tissue distribution, detected in skin, skeletal muscle, heart, lung, articular cartilage, long bone and calvaria. Smaller amounts detected in kidney. Not detected in brain, liver or spleen.

It localises to the secreted. Its subcellular location is the extracellular space. The protein localises to the extracellular matrix. Its function is as follows. Seems to mediate adhesion by cell surface integrin binding. May serve as a communication link between the dermal fibroblast cell surface and its extracellular matrix environment. Enhances TGFB1 activity. Inhibits cell proliferation. Accelerates collagen fibril formation, and stabilizes collagen fibrils against low-temperature dissociation. The sequence is that of Dermatopontin (DPT) from Sus scrofa (Pig).